The chain runs to 298 residues: Inosose dehydratase (298 aa).

This sequence belongs to the IolE/MocC family. It depends on glutathione as a cofactor. Co(2+) serves as cofactor. The cofactor is Mn(2+).

It carries out the reaction scyllo-inosose = 3D-3,5/4-trihydroxycyclohexane-1,2-dione + H2O. Catalyzes the dehydration of inosose (2-keto-myo-inositol, 2KMI or 2,4,6/3,5-pentahydroxycyclohexanone) to 3D-(3,5/4)-trihydroxycyclohexane-1,2-dione (D-2,3-diketo-4-deoxy-epi-inositol). The polypeptide is Inosose dehydratase (Yersinia enterocolitica serotype O:8 / biotype 1B (strain NCTC 13174 / 8081)).